Reading from the N-terminus, the 469-residue chain is 3-isopropylmalate dehydratase large subunit (469 aa).

Residues C350, C410, and C413 each contribute to the [4Fe-4S] cluster site.

Belongs to the aconitase/IPM isomerase family. LeuC type 1 subfamily. As to quaternary structure, heterodimer of LeuC and LeuD. The cofactor is [4Fe-4S] cluster.

It catalyses the reaction (2R,3S)-3-isopropylmalate = (2S)-2-isopropylmalate. The protein operates within amino-acid biosynthesis; L-leucine biosynthesis; L-leucine from 3-methyl-2-oxobutanoate: step 2/4. Functionally, catalyzes the isomerization between 2-isopropylmalate and 3-isopropylmalate, via the formation of 2-isopropylmaleate. This Rhodopseudomonas palustris (strain ATCC BAA-98 / CGA009) protein is 3-isopropylmalate dehydratase large subunit.